Here is a 74-residue protein sequence, read N- to C-terminus: Class I heat shock protein (74 aa).

Positions 1–20 (ILQISGERNVEKEDKNDTWH) are disordered. In terms of domain architecture, sHSP spans 1-74 (ILQISGERNV…PDVKAIEISG (74 aa)). Residues 8 to 20 (RNVEKEDKNDTWH) are compositionally biased toward basic and acidic residues.

This sequence belongs to the small heat shock protein (HSP20) family. As to quaternary structure, forms oligomeric structures.

It localises to the cytoplasm. In Glycine max (Soybean), this protein is Class I heat shock protein (HSP6834-A).